The sequence spans 482 residues: Variant surface glycoprotein ANTAT 1.1C (482 aa).

Positions 1-8 (LHPQQALA) are cleaved as a signal peptide. 2 cysteine pairs are disulfide-bonded: C24–C151 and C133–C188. N-linked (GlcNAc...) asparagine glycosylation is present at N92. Residues N398 and N411 are each glycosylated (N-linked (GlcNAc...) asparagine). D459 carries GPI-anchor amidated aspartate lipidation. The propeptide at 460-482 (SSILVTKKFALSLVSAAFASLLF) is removed in mature form.

The protein resides in the cell membrane. In terms of biological role, VSG forms a coat on the surface of the parasite. The trypanosome evades the immune response of the host by expressing a series of antigenically distinct VSGs from an estimated 1000 VSG genes. This chain is Variant surface glycoprotein ANTAT 1.1C, found in Trypanosoma brucei brucei.